Consider the following 466-residue polypeptide: Glutamate--tRNA ligase (466 aa).

The 'HIGH' region motif lies at 10 to 20 (PSPTGFLHIGG). Residues 252–256 (KLSKR) carry the 'KMSKS' region motif. Residue lysine 255 participates in ATP binding.

Belongs to the class-I aminoacyl-tRNA synthetase family. Glutamate--tRNA ligase type 1 subfamily. In terms of assembly, monomer.

The protein resides in the cytoplasm. The enzyme catalyses tRNA(Glu) + L-glutamate + ATP = L-glutamyl-tRNA(Glu) + AMP + diphosphate. Its function is as follows. Catalyzes the attachment of glutamate to tRNA(Glu) in a two-step reaction: glutamate is first activated by ATP to form Glu-AMP and then transferred to the acceptor end of tRNA(Glu). This is Glutamate--tRNA ligase from Mycoplasmopsis synoviae (strain 53) (Mycoplasma synoviae).